The chain runs to 293 residues: ATP synthase gamma chain (293 aa).

The protein belongs to the ATPase gamma chain family. As to quaternary structure, F-type ATPases have 2 components, CF(1) - the catalytic core - and CF(0) - the membrane proton channel. CF(1) has five subunits: alpha(3), beta(3), gamma(1), delta(1), epsilon(1). CF(0) has three main subunits: a, b and c.

It is found in the cell inner membrane. In terms of biological role, produces ATP from ADP in the presence of a proton gradient across the membrane. The gamma chain is believed to be important in regulating ATPase activity and the flow of protons through the CF(0) complex. The chain is ATP synthase gamma chain from Sinorhizobium fredii (strain NBRC 101917 / NGR234).